Consider the following 122-residue polypeptide: MIQMQTNLDVADNSGARRVMCIKVLGGSKRRYATVGDVIVVSIKEAIPRGKVKKGDVMKAVVVRVRKDIRRPDGSVIRFDRNAAVLINNQSEPVGTRIFGPVPRELRAKNHMKIISLAPEVL.

Belongs to the universal ribosomal protein uL14 family. Part of the 50S ribosomal subunit. Forms a cluster with proteins L3 and L19. In the 70S ribosome, L14 and L19 interact and together make contacts with the 16S rRNA in bridges B5 and B8.

Its function is as follows. Binds to 23S rRNA. Forms part of two intersubunit bridges in the 70S ribosome. This chain is Large ribosomal subunit protein uL14, found in Rhodopseudomonas palustris (strain HaA2).